Here is a 317-residue protein sequence, read N- to C-terminus: Protease 7 (317 aa).

A signal peptide spans 1 to 20 (MRAKLLGIVLTTPIAISSFA). Topologically, residues 21-31 (STETLSFTPDN) are periplasmic. The chain crosses the membrane as a beta stranded span at residues 32 to 41 (INADISLGTL). At 42-69 (SGKTKERVYLAEEGGRKVSQLDWKFNNA) the chain is on the extracellular side. Residues 70 to 78 (AIIKGAINW) traverse the membrane as a beta stranded segment. Over 79–83 (DLMPQ) the chain is Periplasmic. Residues 84 to 92 (ISIGAAGWT) form a beta stranded membrane-spanning segment. Topologically, residues 93–130 (TLGSRGGNMVDQDWMDSSNPGTWTDESRHPDTQLNYAN) are extracellular. Catalysis depends on residues D103 and D105. A beta stranded membrane pass occupies residues 131 to 140 (EFDLNIKGWL). Residues 141–145 (LNEPN) are Periplasmic-facing. The chain crosses the membrane as a beta stranded span at residues 146 to 156 (YRLGLMAGYQE). The Extracellular segment spans residues 157–197 (SRYSFTARGGSYIYSSEEGFRDDIGSFPNGERAIGYKQRFK). The beta stranded transmembrane segment at 198-209 (MPYIGLTGSYRY) threads the bilayer. The Periplasmic segment spans residues 210 to 211 (ED). A beta stranded membrane pass occupies residues 212-221 (FELGGTFKYS). At 222 to 250 (GWVEASDNDEHYDPGKRITYRSKVKDQNY) the chain is on the extracellular side. Catalysis depends on residues D230 and H232. Residues 251 to 261 (YSVSVNAGYYV) form a beta stranded membrane-spanning segment. The Periplasmic segment spans residues 262–264 (TPN). The chain crosses the membrane as a beta stranded span at residues 265–274 (AKVYVEGTWN). Residues 275–306 (RVTNKKGNTSLYDHNDNTSDYSKNGAGIENYN) lie on the Extracellular side of the membrane. A beta stranded membrane pass occupies residues 307 to 316 (FITTAGLKYT). Position 317 (F317) is a topological domain, periplasmic.

It belongs to the peptidase A26 family. As to quaternary structure, homopentamer.

It is found in the cell outer membrane. The enzyme catalyses Has a virtual requirement for Arg in the P1 position and a slightly less stringent preference for this residue in the P1' position, which can also contain Lys, Gly or Val.. Inhibited by zinc. Its function is as follows. Protease that can cleave T7 RNA polymerase, ferric enterobactin receptor protein (FEP), antimicrobial peptide protamine and other proteins. This protease has a specificity for paired basic residues. In Escherichia coli O157:H7, this protein is Protease 7 (ompT).